The chain runs to 804 residues: MQSGHYNRRQSRRQRISSNTTDSPRHTHGTRYRSTNWYTHPPQILSNSETLVAVQELLNSEMDQDSSSDASDDFPGYALHHSTYNGSEQNTSTSRHENRIFKLTEREANEEININTDAIDDEGEAEEGEAEEDAIDDEGEAEEGEAEEDAIDDEGEAEEGEAEEDAAEEDAIDDEGEAEEDAIDDEGEAEEDAIDDEGEAEEDYFSVSQVCSRDADEVYFTLDPEISYSTDLRIAKVMEPAVSKELNVSKRCVEPVTLTGSMLAHNGFDESWFAMRECTRREYITVQGLYDPIHLRYQFDTSRMTPPQILRTIPALPNMTLGELLLIFPIEFMAQPISIERILVEDVFLDRRASSKTHKYGPRWNSVYALPYNAGKMYVQHIPGFYDVSLRAVGQGTAIWHHMILSTAACAISNRISHGDGLGFLLDAAIRISANCIFLGRNDNFGVGDPCWLEDHLAGLPREAVPDVLQVTQLVLPNRGPTVAIMRGFFGALAYWPELRIAISEPSTSLVRYATGHMELAEWFLFSRTHSLKPQFTPTEREMLASFFTLYVTLGGGMLNWICRATAMYLAAPYHSRSAYIAVCESLPYYYIPVNSDLLCDLEVLLLGEVDLPTVCESYATIAHELTGYEAVRTAATNFMIEFADCYKESETDLMVSAYLGAVLLLQRVLGHANLLLLLLSGAALYGGCSIYIPRGILDAYNTLMLAASPLYAHQTLTSFWKDRDDAMQTLGIRPTTDVLPKEQDRIVQASPIEMNFRFVGLETIYPREQPIPSVDLAENLMQYRNEILGLDWKSVAMHLLRKY.

Positions 1-15 are enriched in basic residues; it reads MQSGHYNRRQSRRQR. 2 disordered regions span residues 1-42 and 58-206; these read MQSG…THPP and LNSE…DYFS. A Nuclear localization signal motif is present at residues 11–31; the sequence is SRRQRISSNTTDSPRHTHGTR. A compositionally biased stretch (polar residues) spans 32–42; the sequence is YRSTNWYTHPP. The segment covering 62-72 has biased composition (acidic residues); that stretch reads MDQDSSSDASD. Positions 82–93 are enriched in polar residues; it reads STYNGSEQNTST. A compositionally biased stretch (basic and acidic residues) spans 94–109; it reads SRHENRIFKLTEREAN. A run of 3 repeats spans residues 117–132, 133–148, and 149–164. A 6 X 16 AA approximate tandem repeats region spans residues 117–203; that stretch reads DAIDDEGEAE…IDDEGEAEED (87 aa). Positions 118 to 204 are enriched in acidic residues; sequence AIDDEGEAEE…DDEGEAEEDY (87 aa). The 1-4; truncated repeat unit spans residues 170 to 180; it reads DAIDDEGEAEE. A 1-5; truncated repeat occupies 181–191; that stretch reads DAIDDEGEAEE. The 1-6; truncated repeat unit spans residues 192–203; it reads DAIDDEGEAEED. Positions 770 to 792 match the Nuclear export signal motif; sequence QPIPSVDLAENLMQYRNEILGLD.

It belongs to the alphaherpesvirinae HHV-1 UL47 family. In terms of assembly, interacts with US3 kinase. Interacts with ORF24 and ORF27; these interactions seem important for efficient virion nuclear egress. Interacts with ORF17/VHS. Post-translationally, phosphorylated by US3. This phosphorylation is required for proper nuclear localization.

It localises to the virion tegument. The protein localises to the host nucleus. Its subcellular location is the host cytoplasm. Its function is as follows. Tegument protein that can bind to various RNA transcripts. Plays a role in the attenuation of selective viral and cellular mRNA degradation by modulating the activity of host shutoff RNase ORF17/VHS. Also plays a role in the primary envelopment of virions in the perinuclear space, probably by interacting with two nuclear egress proteins ORF24 and ORF27. In Varicella-zoster virus (strain Oka vaccine) (HHV-3), this protein is Tegument protein UL47 homolog.